A 311-amino-acid chain; its full sequence is Cell division protein ZipA (311 aa).

The Periplasmic portion of the chain corresponds to 1–6; it reads MENLQL. Residues 7–27 traverse the membrane as a helical segment; it reads VLFVLGAIAIIAVLVHGFWSI. At 28 to 311 the chain is on the cytoplasmic side; the sequence is RKQQPKSLKE…YLQRIRAQLD (284 aa). The interval 46–114 is disordered; that stretch reads DQASVRDSQG…FALSDEPVQR (69 aa). Composition is skewed to basic and acidic residues over residues 62 to 83 and 94 to 103; these read GEVRVRKEVPATDRQEKEDKPV and RDVEDSRHEQ.

The protein belongs to the ZipA family. As to quaternary structure, interacts with FtsZ via their C-terminal domains.

It is found in the cell inner membrane. Functionally, essential cell division protein that stabilizes the FtsZ protofilaments by cross-linking them and that serves as a cytoplasmic membrane anchor for the Z ring. Also required for the recruitment to the septal ring of downstream cell division proteins. This chain is Cell division protein ZipA, found in Shewanella woodyi (strain ATCC 51908 / MS32).